The following is an 809-amino-acid chain: Trimethylamine-N-oxide reductase 2 (809 aa).

Residues 1–31 constitute a signal peptide (tat-type signal); the sequence is MTLTRREFIKHSGIAAGALVVTSAAPLPAWA. Mo-bis(molybdopterin guanine dinucleotide) is bound at residue Ser176.

This sequence belongs to the prokaryotic molybdopterin-containing oxidoreductase family. Mo-bis(molybdopterin guanine dinucleotide) serves as cofactor. Predicted to be exported by the Tat system. The position of the signal peptide cleavage has not been experimentally proven.

The protein resides in the periplasm. It catalyses the reaction trimethylamine + 2 Fe(III)-[cytochrome c] + H2O = trimethylamine N-oxide + 2 Fe(II)-[cytochrome c] + 3 H(+). Reduces trimethylamine-N-oxide (TMAO) into trimethylamine; an anaerobic reaction coupled to energy-yielding reactions. Can also reduce other N- and S-oxide compounds such as 4-methylmorpholine-N-oxide and biotin sulfoxide (BSO), but with a lower catalytic efficiency. The protein is Trimethylamine-N-oxide reductase 2 (torZ) of Escherichia coli O157:H7.